The following is a 201-amino-acid chain: Small ribosomal subunit protein uS4c (201 aa).

A disordered region spans residues glycine 20–tyrosine 44. The S4 RNA-binding domain occupies methionine 89–isoleucine 150.

The protein belongs to the universal ribosomal protein uS4 family. Part of the 30S ribosomal subunit. Contacts protein S5. The interaction surface between S4 and S5 is involved in control of translational fidelity.

It is found in the plastid. The protein localises to the chloroplast. In terms of biological role, one of the primary rRNA binding proteins, it binds directly to 16S rRNA where it nucleates assembly of the body of the 30S subunit. Functionally, with S5 and S12 plays an important role in translational accuracy. This is Small ribosomal subunit protein uS4c (rps4) from Nicotiana tomentosiformis (Tobacco).